Consider the following 88-residue polypeptide: Outer membrane protein H.8 (88 aa).

Residues 1 to 17 (MKKSLFAAALLSLALAA) form the signal peptide. The N-palmitoyl cysteine moiety is linked to residue C18. The S-diacylglycerol cysteine moiety is linked to residue C18. A run of 13 repeats spans residues 23–27 (AAEAP), 28–32 (AAEAS), 33–37 (STEAP), 38–42 (AAEAP), 43–47 (AAEAP), 48–52 (AAEAA), 53–57 (AAEAP), 58–62 (AAEAP), 63–67 (AAEAP), 68–72 (AAEAA), 73–77 (ATEAP), 78–82 (AAEAP), and 83–87 (AAEAA). Positions 23–87 (AAEAPAAEAS…AAEAPAAEAA (65 aa)) are 13 X 5 AA tandem repeats of [AS]-[AT]-E-A-[PAS]. The tract at residues 23–88 (AAEAPAAEAS…AEAPAAEAAK (66 aa)) is disordered. The segment covering 25–88 (EAPAAEASST…AEAPAAEAAK (64 aa)) has biased composition (low complexity).

The protein localises to the cell outer membrane. The chain is Outer membrane protein H.8 from Neisseria gonorrhoeae (strain ATCC 700825 / FA 1090).